The chain runs to 216 residues: Cytidylate kinase (216 aa).

7–15 (GPAASGKGT) contacts ATP.

Belongs to the cytidylate kinase family. Type 1 subfamily.

It is found in the cytoplasm. It carries out the reaction CMP + ATP = CDP + ADP. The enzyme catalyses dCMP + ATP = dCDP + ADP. The chain is Cytidylate kinase from Methylocella silvestris (strain DSM 15510 / CIP 108128 / LMG 27833 / NCIMB 13906 / BL2).